The sequence spans 1216 residues: Probable phospholipid-transporting ATPase 4 (1216 aa).

The Cytoplasmic portion of the chain corresponds to 1-74; the sequence is MARGRIRSKL…TTRYNLITFF (74 aa). The chain crosses the membrane as a helical span at residues 75–96; the sequence is PKCLYEQFHRAANFYFLVAAIL. The Extracellular portion of the chain corresponds to 97–100; sequence SVFP. Residues 101 to 123 traverse the membrane as a helical segment; it reads LSPFNKWSMIAPLVFVVGLSMLK. Residues 124–305 are Cytoplasmic-facing; sequence EALEDWSRFM…SRIEKTMDYI (182 aa). The chain crosses the membrane as a helical span at residues 306 to 327; sequence IYTLLVLLILISCISSSGFAWE. The Extracellular portion of the chain corresponds to 328–359; that stretch reads TKFHMPKWWYLRPEEPENLTNPSNPVYAGFVH. A helical transmembrane segment spans residues 360–377; it reads LITALLLYGYLIPISLYV. Residues 378–922 are Cytoplasmic-facing; it reads SIEVVKVLQA…HGHWCYKRIA (545 aa). Aspartate 425 serves as the catalytic 4-aspartylphosphate intermediate. Lysine 605 is covalently cross-linked (Glycyl lysine isopeptide (Lys-Gly) (interchain with G-Cter in ubiquitin)). 2 residues coordinate Mg(2+): aspartate 867 and aspartate 871. A helical transmembrane segment spans residues 923–942; it reads QMICYFFYKNIAFGLTLFYF. Residues 943 to 956 are Extracellular-facing; that stretch reads EAFTGFSGQSVYND. Residues 957 to 976 form a helical membrane-spanning segment; the sequence is YYLLLFNVVLTSLPVIALGV. Over 977-1006 the chain is Cytoplasmic; sequence FEQDVSSEICLQFPALYQQGKKNLFFDWYR. Residues 1007 to 1029 traverse the membrane as a helical segment; it reads ILGWMGNGVYSSLVIFFLNIGII. Residues 1030–1042 are Extracellular-facing; that stretch reads YEQAFRVSGQTAD. The chain crosses the membrane as a helical span at residues 1043-1065; that stretch reads MDAVGTTMFTCIIWAVNVQIALT. Over 1066–1071 the chain is Cytoplasmic; that stretch reads VSHFTW. A helical membrane pass occupies residues 1072 to 1092; the sequence is IQHVLIWGSIGLWYLFVALYG. Over 1093–1109 the chain is Extracellular; that stretch reads MMPPSLSGNIYRILVEI. Residues 1110 to 1134 traverse the membrane as a helical segment; it reads LAPAPIYWIATFLVTVTTVLPYFAH. Topologically, residues 1135 to 1216 are cytoplasmic; sequence ISFQRFLHPL…TQDTMSPRSV (82 aa). Positions 1195–1216 are disordered; that stretch reads LNKKQSNMSQFSTQDTMSPRSV. Residues 1198–1216 show a composition bias toward polar residues; sequence KQSNMSQFSTQDTMSPRSV.

The protein belongs to the cation transport ATPase (P-type) (TC 3.A.3) family. Type IV subfamily.

It localises to the membrane. The enzyme catalyses ATP + H2O + phospholipidSide 1 = ADP + phosphate + phospholipidSide 2.. Involved in transport of phospholipids. This chain is Probable phospholipid-transporting ATPase 4, found in Arabidopsis thaliana (Mouse-ear cress).